The primary structure comprises 566 residues: 15-cis-phytoene desaturase, chloroplastic/chromoplastic (566 aa).

The transit peptide at M1–A86 directs the protein to the chloroplast and chromoplast. FAD is bound by residues A103, E122–A123, K130, H147–I148, and Y153. R288 contributes to the substrate binding site. Residues I330 and D519 each coordinate FAD. A527 contacts substrate. M529 contributes to the FAD binding site.

This sequence belongs to the carotenoid/retinoid oxidoreductase family. In terms of assembly, homotetramer. It depends on FAD as a cofactor.

The protein resides in the plastid. Its subcellular location is the chloroplast. It is found in the chromoplast. The protein localises to the membrane. It carries out the reaction 2 a plastoquinone + 15-cis-phytoene = 9,9',15-tri-cis-zeta-carotene + 2 a plastoquinol. The protein operates within carotenoid biosynthesis; lycopene biosynthesis. Functionally, converts phytoene into zeta-carotene via the intermediary of phytofluene by the symmetrical introduction of two double bonds at the C-11 and C-11' positions of phytoene with a concomitant isomerization of two neighboring double bonds at the C9 and C9' positions from trans to cis. In Arabidopsis thaliana (Mouse-ear cress), this protein is 15-cis-phytoene desaturase, chloroplastic/chromoplastic (PDS).